The following is a 638-amino-acid chain: MAAKSDGGGVGVGFAQLHNLDEAVGSGEEDGEPGGGGCGGGDGSEPGESSSLHICHCCNTSSCYWGCRSACLRSLLGKKPRRSAAAADGGDQPLQPPGAAGRHPPTPSAGRPQPASPQVERPWLDCLWIVLALLVFFGDVGTDLWLALDYYRKGDYGCFGLTLFFVLVPSLLVQSLSFRWFVQDYTGGGLGAVEGLSSRGPPMMGAGYGHGAARGGPGAGGSATPGAQRLCRLSVWIWQSVIHLLQMGQVWRYIRTMYLGIQSQRQKEHQRRFYWAMMYEYADVNMLRLLETFLESAPQLVLQLCIMIQKNSAETLPCVSSVTSLMSLAWVLASYHKLLRDSRDDKKSMSYRGALIHLFWRLFTISSRVISFALFASIFQLYFGIFVVVHWCAMAFWIIHGGTDFCMSKWEEILFNMVVGIVYIFCWFNVKEGRTRYRMFAYYTIVLTENAALTFLWYFYRNPESTDSYAVPALCCVFVSFVAGITLMLLYYGVLHPMGPRAKVFASSCCAELLWGIPLPPDVEPMAPQTPGYRGTQVTPTRAVTEQQEDLTADTCLPVFQVRPMGPSTPSGRPYHPEGPLIKIDMPRKRYPAWDAHFVDRRLRRTINILQYVTPTAVGIRYRDGPLLYELLQYESSL.

Disordered stretches follow at residues 24–43 (VGSGEEDGEPGGGGCGGGDG) and 82–117 (RSAAAADGGDQPLQPPGAAGRHPPTPSAGRPQPASP). Over residues 33–43 (PGGGGCGGGDG) the composition is skewed to gly residues. 7 consecutive transmembrane segments (helical) span residues 127–147 (LWIVLALLVFFGDVGTDLWLA), 158–178 (CFGLTLFFVLVPSLLVQSLSF), 315–335 (TLPCVSSVTSLMSLAWVLASY), 369–389 (VISFALFASIFQLYFGIFVVV), 410–430 (WEEILFNMVVGIVYIFCWFNV), 439–459 (MFAYYTIVLTENAALTFLWYF), and 470–490 (AVPALCCVFVSFVAGITLMLL).

It belongs to the XK family.

Its subcellular location is the cell membrane. In Mus musculus (Mouse), this protein is XK-related protein 6.